The sequence spans 635 residues: 1-deoxy-D-xylulose-5-phosphate synthase (635 aa).

Thiamine diphosphate contacts are provided by residues His73 and 114–116 (SHA). Mg(2+) is bound at residue Asp146. Thiamine diphosphate contacts are provided by residues 147–148 (GA), Asn176, Tyr287, and Glu368. Residue Asn176 participates in Mg(2+) binding.

The protein belongs to the transketolase family. DXPS subfamily. In terms of assembly, homodimer. The cofactor is Mg(2+). Thiamine diphosphate is required as a cofactor.

The enzyme catalyses D-glyceraldehyde 3-phosphate + pyruvate + H(+) = 1-deoxy-D-xylulose 5-phosphate + CO2. It participates in metabolic intermediate biosynthesis; 1-deoxy-D-xylulose 5-phosphate biosynthesis; 1-deoxy-D-xylulose 5-phosphate from D-glyceraldehyde 3-phosphate and pyruvate: step 1/1. Catalyzes the acyloin condensation reaction between C atoms 2 and 3 of pyruvate and glyceraldehyde 3-phosphate to yield 1-deoxy-D-xylulose-5-phosphate (DXP). The polypeptide is 1-deoxy-D-xylulose-5-phosphate synthase (Corynebacterium diphtheriae (strain ATCC 700971 / NCTC 13129 / Biotype gravis)).